The chain runs to 1189 residues: Disabled homolog 2-interacting protein (1189 aa).

Positions 1-75 (MSAGGSARKS…EPSAATPFRV (75 aa)) are disordered. The segment covering 20-38 (LLRRPRLQRQRSRSRSRTR) has biased composition (basic residues). Positions 39 to 49 (PARESPQERPG) are enriched in basic and acidic residues. The 102-residue stretch at 101–202 (SFRHILPGFR…WMENLRRAVH (102 aa)) folds into the PH domain. The 119-residue stretch at 193–311 (WMENLRRAVH…AGRQFVEKWY (119 aa)) folds into the C2 domain. The 209-residue stretch at 387–595 (GKVKDFLTDL…TNMQRFLLEI (209 aa)) folds into the Ras-GAP domain. The interval 646–943 (LRDVHTALST…RTPPNLLSTL (298 aa)) is necessary for interaction with AKT1. Positions 653 to 668 (LSTPGSGQLPGTNDLA) are enriched in polar residues. 2 disordered regions span residues 653–678 (LSTPGSGQLPGTNDLASTPGSGSSSI) and 715–742 (RSSGVQPSPARSSSYSEANEPDLQMANG). The span at 669-678 (STPGSGSSSI) shows a compositional bias: low complexity. A compositionally biased stretch (polar residues) spans 715–731 (RSSGVQPSPARSSSYSE). Serine 728 carries the phosphoserine; by MAP3K5 and RIPK1 modification. Phosphoserine is present on serine 747. 5 disordered regions span residues 803 to 823 (AGQTPTTPGTSEGAPGRPQLL), 843 to 865 (PRGLGDSGSEGHSSLSSHSNSEE), 895 to 998 (SLTE…SPNA), 1015 to 1035 (EDEGLGPDPPHRDRLRSKDEL), and 1164 to 1189 (RNGISPTNPTKLQITENGEFRNSSNC). Residues 852–865 (EGHSSLSSHSNSEE) show a composition bias toward low complexity. Residues 919-931 (QPPPPPPPPPPAP) are compositionally biased toward pro residues. Composition is skewed to polar residues over residues 938–955 (NLLSTLQYPRPSSGTLAS) and 966–976 (RLRQQSSSSKG). Residues serine 978 and serine 995 each carry the phosphoserine modification. Basic and acidic residues predominate over residues 1023–1035 (PPHRDRLRSKDEL). Residues 1026-1159 (RDRLRSKDEL…SALTQLKERY (134 aa)) adopt a coiled-coil conformation.

In terms of assembly, on plasma membrane, exists in an inactive form complexed with TNFR1; in response to TNF-alpha, dissociates from TNFR1 complex, translocates to cytoplasm and forms part of an intracellular signaling complex comprising TRADD, RIPK1, TRAF2 and MAP3K5. Interacts with DAB1. Interacts (via NPXY motif) with DAB2 (via PID domain). Interacts (via PH domain) with ERN1. Part of a cytoplasmic complex made of HIPK1, DAB2IP and MAP3K5 in response to TNF-alpha; this complex formation promotes MAP3K5-JNK activation and subsequent apoptosis. Interacts (via N-terminal domain) with JAK2; the interaction occurs in a IFNG/IFN-gamma-dependent manner and inhibits JAK2 autophosphorylation activity. Interacts (via C2 domain) with GSK3B; the interaction stimulates GSK3B kinase activation. Interacts (via C2 domain) with PPP2CA. Interacts (via proline-rich motif) with a regulatory p85 subunit (via SH3 domain) of the PI3K complex; the interaction inhibits the PI3K-AKT complex activity in a TNF-alpha-dependent manner in prostate cancer (PCa) cells. Interacts with AKT1; the interaction is increased in a TNF-alpha-induced manner. Interacts (via C2 domain and active form preferentially) with KDR/VEGFR2 (tyrosine-phosphorylated active form preferentially); the interaction occurs at the late phase of VEGFA response and inhibits KDR/VEGFR2 activity. Interacts (via N-terminus C2 domain) with MAP3K5 ('Ser-966' dephosphorylated form preferentially); the interaction occurs in a TNF-alpha-induced manner. Interacts (via Ras-GAP domain) with the catalytic subunit of protein phosphatase PP2A; the interaction occurs in resting endothelial cells, is further enhanced by TNF-alpha stimulation and is required to bridge PP2A to MAP3K5. Interacts (via C-terminus PER domain) with TRAF2 (via zinc fingers); the interaction occurs in a TNF-alpha-dependent manner. Interacts with 14-3-3 proteins; the interaction occurs in a TNF-alpha-dependent manner. Interacts (via Ras-GAP domain) with RIPK1 (via kinase domain); the interaction occurs in a TNF-alpha-dependent manner. Interacts with RAB40C; acts as a GAP for RAB40C. In response to TNF-alpha-induction, phosphorylated at Ser-728; phosphorylation leads to a conformational change, and thus, increases its association with 14-3-3 proteins, MAP3K5, RIPK1 and TRAF2 in endothelial cells; also stimulates regulatory p85 subunit sequestring and PI3K-p85 complex activity inhibition. In terms of tissue distribution, expressed in endothelial and vascular smooth muscle cells (VSMCs). Expressed in prostate epithelial but poorly in prostate cancer cells. Poorly expressed in medulloblastoma cells compared to cerebellar precursor proliferating progenitor cells (at protein level). Low expression in prostate. Down-regulated in prostate cancer.

It is found in the cytoplasm. It localises to the cell membrane. Its subcellular location is the membrane. The protein resides in the cell projection. The protein localises to the dendrite. In terms of biological role, functions as a scaffold protein implicated in the regulation of a large spectrum of both general and specialized signaling pathways. Involved in several processes such as innate immune response, inflammation and cell growth inhibition, apoptosis, cell survival, angiogenesis, cell migration and maturation. Also plays a role in cell cycle checkpoint control; reduces G1 phase cyclin levels resulting in G0/G1 cell cycle arrest. Mediates signal transduction by receptor-mediated inflammatory signals, such as the tumor necrosis factor (TNF), interferon (IFN) or lipopolysaccharide (LPS). Modulates the balance between phosphatidylinositol 3-kinase (PI3K)-AKT-mediated cell survival and apoptosis stimulated kinase (MAP3K5)-JNK signaling pathways; sequesters both AKT1 and MAP3K5 and counterbalances the activity of each kinase by modulating their phosphorylation status in response to pro-inflammatory stimuli. Acts as a regulator of the endoplasmic reticulum (ER) unfolded protein response (UPR) pathway; specifically involved in transduction of the ER stress-response to the JNK cascade through ERN1. Mediates TNF-alpha-induced apoptosis activation by facilitating dissociation of inhibitor 14-3-3 from MAP3K5; recruits the PP2A phosphatase complex which dephosphorylates MAP3K5 on 'Ser-966', leading to the dissociation of 13-3-3 proteins and activation of the MAP3K5-JNK signaling pathway in endothelial cells. Also mediates TNF/TRAF2-induced MAP3K5-JNK activation, while it inhibits CHUK-NF-kappa-B signaling. Acts a negative regulator in the IFN-gamma-mediated JAK-STAT signaling cascade by inhibiting smooth muscle cell (VSMCs) proliferation and intimal expansion, and thus, prevents graft arteriosclerosis (GA). Acts as a GTPase-activating protein (GAP) for the ADP ribosylation factor 6 (ARF6), Ras and RAB40C. Promotes hydrolysis of the ARF6-bound GTP and thus, negatively regulates phosphatidylinositol 4,5-bisphosphate (PIP2)-dependent TLR4-TIRAP-MyD88 and NF-kappa-B signaling pathways in endothelial cells in response to lipopolysaccharides (LPS). Binds specifically to phosphatidylinositol 4-phosphate (PtdIns4P) and phosphatidylinositol 3-phosphate (PtdIns3P). In response to vascular endothelial growth factor (VEGFA), acts as a negative regulator of the VEGFR2-PI3K-mediated angiogenic signaling pathway by inhibiting endothelial cell migration and tube formation. In the developing brain, promotes both the transition from the multipolar to the bipolar stage and the radial migration of cortical neurons from the ventricular zone toward the superficial layer of the neocortex in a glial-dependent locomotion process. Probable downstream effector of the Reelin signaling pathway; promotes Purkinje cell (PC) dendrites development and formation of cerebellar synapses. Also functions as a tumor suppressor protein in prostate cancer progression; prevents cell proliferation and epithelial-to-mesenchymal transition (EMT) through activation of the glycogen synthase kinase-3 beta (GSK3B)-induced beta-catenin and inhibition of PI3K-AKT and Ras-MAPK survival downstream signaling cascades, respectively. The chain is Disabled homolog 2-interacting protein from Homo sapiens (Human).